A 264-amino-acid polypeptide reads, in one-letter code: uncharacterized protein (264 aa).

The interval 1-20 (MENIEKKCQPETINEDNNDE) is disordered.

It belongs to the mimivirus R73/L269/L862 family.

This is an uncharacterized protein from Acanthamoeba polyphaga mimivirus (APMV).